A 576-amino-acid polypeptide reads, in one-letter code: Proline--tRNA ligase (576 aa).

Belongs to the class-II aminoacyl-tRNA synthetase family. ProS type 1 subfamily. In terms of assembly, homodimer.

It is found in the cytoplasm. It carries out the reaction tRNA(Pro) + L-proline + ATP = L-prolyl-tRNA(Pro) + AMP + diphosphate. Its function is as follows. Catalyzes the attachment of proline to tRNA(Pro) in a two-step reaction: proline is first activated by ATP to form Pro-AMP and then transferred to the acceptor end of tRNA(Pro). As ProRS can inadvertently accommodate and process non-cognate amino acids such as alanine and cysteine, to avoid such errors it has two additional distinct editing activities against alanine. One activity is designated as 'pretransfer' editing and involves the tRNA(Pro)-independent hydrolysis of activated Ala-AMP. The other activity is designated 'posttransfer' editing and involves deacylation of mischarged Ala-tRNA(Pro). The misacylated Cys-tRNA(Pro) is not edited by ProRS. This Leptospira interrogans serogroup Icterohaemorrhagiae serovar copenhageni (strain Fiocruz L1-130) protein is Proline--tRNA ligase.